The sequence spans 649 residues: ATP-dependent zinc metalloprotease FtsH (649 aa).

At 1–18 (MQCSYPLARQLERSSALN) the chain is on the cytoplasmic side. A helical transmembrane segment spans residues 19–39 (NNLFQKAAIWLVIALVLFTVF). The Periplasmic segment spans residues 40–115 (KQFDKPRAQD…VTGKADDEPN (76 aa)). A helical membrane pass occupies residues 116–136 (VLVQALYYLGPTLLIIVFWFY). The Cytoplasmic segment spans residues 137 to 649 (MMRQMQGGGK…PATARADETV (513 aa)). Residue 210-217 (GPPGTGKT) participates in ATP binding. Position 432 (His-432) interacts with Zn(2+). Glu-433 is a catalytic residue. Residues His-436 and Asp-508 each contribute to the Zn(2+) site. Residues 606-649 (IMAGRPPRPPRGAQGPNSGGNTPPGGSPVAPTNAPATARADETV) form a disordered region. Residues 616–626 (RGAQGPNSGGN) show a composition bias toward low complexity.

It in the central section; belongs to the AAA ATPase family. This sequence in the C-terminal section; belongs to the peptidase M41 family. In terms of assembly, homohexamer. Requires Zn(2+) as cofactor.

It localises to the cell inner membrane. Its function is as follows. Acts as a processive, ATP-dependent zinc metallopeptidase for both cytoplasmic and membrane proteins. Plays a role in the quality control of integral membrane proteins. The polypeptide is ATP-dependent zinc metalloprotease FtsH (Cupriavidus metallidurans (strain ATCC 43123 / DSM 2839 / NBRC 102507 / CH34) (Ralstonia metallidurans)).